Here is a 536-residue protein sequence, read N- to C-terminus: 2-isopropylmalate synthase (536 aa).

Positions 8-273 (VLIFDTTLRD…FFGKDSESPT (266 aa)) constitute a Pyruvate carboxyltransferase domain. Mn(2+) contacts are provided by aspartate 17, histidine 208, histidine 210, and asparagine 244. The segment at 408 to 536 (KLHLVQVSCG…PQHDVVKANL (129 aa)) is regulatory domain.

The protein belongs to the alpha-IPM synthase/homocitrate synthase family. LeuA type 1 subfamily. In terms of assembly, homodimer. Mn(2+) serves as cofactor.

The protein localises to the cytoplasm. The enzyme catalyses 3-methyl-2-oxobutanoate + acetyl-CoA + H2O = (2S)-2-isopropylmalate + CoA + H(+). It participates in amino-acid biosynthesis; L-leucine biosynthesis; L-leucine from 3-methyl-2-oxobutanoate: step 1/4. Its function is as follows. Catalyzes the condensation of the acetyl group of acetyl-CoA with 3-methyl-2-oxobutanoate (2-ketoisovalerate) to form 3-carboxy-3-hydroxy-4-methylpentanoate (2-isopropylmalate). This Prochlorococcus marinus (strain SARG / CCMP1375 / SS120) protein is 2-isopropylmalate synthase.